Here is a 374-residue protein sequence, read N- to C-terminus: dTDP-3-amino-3,4,6-trideoxy-alpha-D-glucose transaminase (374 aa).

Pyridoxal 5'-phosphate is bound by residues G60, Q160, 181 to 186, Y214, Y221, 229 to 231, and Y316; these read SFYPTK and NSR. K186 carries the post-translational modification N6-(pyridoxal phosphate)lysine.

It belongs to the degT/dnrJ/eryC1 family. Pyridoxal 5'-phosphate is required as a cofactor.

The catalysed reaction is dTDP-3-amino-3,4,6-trideoxy-alpha-D-glucose + 2-oxoglutarate = dTDP-3-dehydro-4,6-dideoxy-alpha-D-glucose + L-glutamate. It participates in antibiotic biosynthesis. In terms of biological role, involved in the biosynthesis of the amino sugar dTDP-L-megosamine which is found in the macrolide antibiotic and antiparasitic megalomicin A. Catalyzes the reversible transfer of the amino group from L-glutamate to the C-3 position of dTDP-3-keto-4,6-deoxyglucose to yield dTDP-3-amino-3,4,6-trideoxyglucose. The polypeptide is dTDP-3-amino-3,4,6-trideoxy-alpha-D-glucose transaminase (Micromonospora megalomicea subsp. nigra).